We begin with the raw amino-acid sequence, 328 residues long: Diaminopimelate epimerase (328 aa).

Residues asparagine 14 and asparagine 73 each contribute to the substrate site. Cysteine 82 functions as the Proton donor in the catalytic mechanism. Substrate contacts are provided by residues 83-84 (GN), asparagine 170, asparagine 206, and 224-225 (ER). Catalysis depends on cysteine 233, which acts as the Proton acceptor. 234-235 (GT) contributes to the substrate binding site.

The protein belongs to the diaminopimelate epimerase family. As to quaternary structure, homodimer.

The protein localises to the cytoplasm. The enzyme catalyses (2S,6S)-2,6-diaminopimelate = meso-2,6-diaminopimelate. Its pathway is amino-acid biosynthesis; L-lysine biosynthesis via DAP pathway; DL-2,6-diaminopimelate from LL-2,6-diaminopimelate: step 1/1. In terms of biological role, catalyzes the stereoinversion of LL-2,6-diaminopimelate (L,L-DAP) to meso-diaminopimelate (meso-DAP), a precursor of L-lysine and an essential component of the bacterial peptidoglycan. The sequence is that of Diaminopimelate epimerase from Listeria welshimeri serovar 6b (strain ATCC 35897 / DSM 20650 / CCUG 15529 / CIP 8149 / NCTC 11857 / SLCC 5334 / V8).